We begin with the raw amino-acid sequence, 390 residues long: Phosphoglycerate kinase (390 aa).

Substrate-binding positions include 19–21 (DYN), Arg-34, 57–60 (HLGR), Arg-115, and Arg-148. ATP-binding positions include Lys-198, Gly-289, Glu-320, and 347–350 (GGDS).

Belongs to the phosphoglycerate kinase family. As to quaternary structure, monomer.

The protein resides in the cytoplasm. The catalysed reaction is (2R)-3-phosphoglycerate + ATP = (2R)-3-phospho-glyceroyl phosphate + ADP. The protein operates within carbohydrate degradation; glycolysis; pyruvate from D-glyceraldehyde 3-phosphate: step 2/5. This chain is Phosphoglycerate kinase (pgk), found in Thermus thermophilus (strain ATCC 27634 / DSM 579 / HB8).